We begin with the raw amino-acid sequence, 112 residues long: MADIPAGDYEKGKKVYKQRCLQCHVVDSTATKTGPTLYGVIGRTSGTVAGFDYSAANKSKGVVWTRETLFEYLLNPKKYIPGTKMVFAGLKKADERADLIKYIEVECSKPLA.

Positions 20, 23, 24, and 85 each coordinate heme c.

It belongs to the cytochrome c family. In terms of processing, binds 1 heme c group covalently per subunit.

The protein localises to the mitochondrion intermembrane space. In terms of biological role, electron carrier protein. The oxidized form of the cytochrome c heme group can accept an electron from the heme group of the cytochrome c1 subunit of cytochrome reductase. Cytochrome c then transfers this electron to the cytochrome oxidase complex, the final protein carrier in the mitochondrial electron-transport chain. This chain is Cytochrome c 2.1, found in Caenorhabditis briggsae.